A 112-amino-acid polypeptide reads, in one-letter code: 2Fe-2S ferredoxin (112 aa).

A 2Fe-2S ferredoxin-type domain is found at 5–107 (IKVTFIVNDG…GIKVRLPSAT (103 aa)). The [2Fe-2S] cluster site is built by Cys42, Cys48, Cys51, and Cys88.

It belongs to the adrenodoxin/putidaredoxin family. [2Fe-2S] cluster is required as a cofactor.

Its function is as follows. Ferredoxin are iron-sulfur proteins that transfer electrons in a wide variety of metabolic reactions. This chain is 2Fe-2S ferredoxin (fdxB), found in Rickettsia felis (strain ATCC VR-1525 / URRWXCal2) (Rickettsia azadi).